The chain runs to 396 residues: Methionine import ATP-binding protein MetN 2 (396 aa).

The ABC transporter domain maps to 41 to 280; it reads VSFELVGKVF…PRHGATRALL (240 aa). 77–84 is an ATP binding site; the sequence is GRSGAGKS.

The protein belongs to the ABC transporter superfamily. Methionine importer (TC 3.A.1.24) family. In terms of assembly, the complex is composed of two ATP-binding proteins (MetN), two transmembrane proteins (MetI) and a solute-binding protein (MetQ).

Its subcellular location is the cell inner membrane. The enzyme catalyses L-methionine(out) + ATP + H2O = L-methionine(in) + ADP + phosphate + H(+). The catalysed reaction is D-methionine(out) + ATP + H2O = D-methionine(in) + ADP + phosphate + H(+). Functionally, part of the ABC transporter complex MetNIQ involved in methionine import. Responsible for energy coupling to the transport system. The sequence is that of Methionine import ATP-binding protein MetN 2 from Burkholderia mallei (strain ATCC 23344).